The chain runs to 66 residues: MNKTFFLVVIMATVLVLAFDATDAQTNVRCTNTRDCFSFCSQFTNVHPACLGDYCECLRWEGGISI.

Residues 1-24 (MNKTFFLVVIMATVLVLAFDATDA) form the signal peptide. 3 disulfide bridges follow: Cys-30-Cys-50, Cys-36-Cys-55, and Cys-40-Cys-57.

The protein belongs to the short scorpion toxin superfamily. Potassium channel inhibitor family. Alpha-KTx 30 subfamily. In terms of tissue distribution, expressed by the venom gland.

It localises to the secreted. Its function is as follows. inhibits Kv1.3/KCNA3 channel. This is Potassium channel toxin alpha-KTx 30.3 from Scorpiops jendeki (Scorpion).